A 4960-amino-acid polypeptide reads, in one-letter code: Malformin synthetase mlfA (4960 aa).

The tract at residues 194–564 is adenylation 1; it reads ERHATNRPHS…CGRADTQVKL (371 aa). In terms of domain architecture, Carrier 1 spans 705–778; the sequence is SRLEQEVQLA…EAASLAEVQE (74 aa). The residue at position 739 (Ser-739) is an O-(pantetheine 4'-phosphoryl)serine. The tract at residues 816-1247 is condensation 1; it reads EDVFPCTTMQ…ALNTLSLLQA (432 aa). The interval 1275-1650 is adenylation 2; sequence DRWVTRQPEG…GRKDTQVKLR (376 aa). One can recognise a Carrier 2 domain in the interval 1777 to 1854; it reads TPASELERTL…HLAAEVGEPA (78 aa). 2 disordered regions span residues 1855 to 1883 and 1917 to 1943; these read GQSASSASSTTEEGFTFSTPDDSSTNDGV and GGSSSNKTPSVSSSSSSSSSSKRKKNA. Composition is skewed to low complexity over residues 1857-1881 and 1919-1936; these read SASSASSTTEEGFTFSTPDDSSTND and SSSNKTPSVSSSSSSSSS. A condensation 2 region spans residues 1989–2404; the sequence is EDIYPATALQ…AVSCSDKETL (416 aa). An adenylation 3 region spans residues 2427–2819; sequence RRTPHAPAVC…IGRRDGQLKL (393 aa). A Carrier 3 domain is found at 2955–3031; it reads RPVTSQEREM…QLICHINTIR (77 aa). An O-(pantetheine 4'-phosphoryl)serine modification is found at Ser-2992. Condensation stretches follow at residues 3049–3464 and 3520–3889; these read VALA…FTFP and SGYV…EQLV. An adenylation 4 region spans residues 3914–4304; the sequence is HNSRQAVCAW…VGRKDNQIKF (391 aa). The Carrier 4 domain maps to 4438 to 4514; it reads MPSTAAERKM…DLSDQAKSLI (77 aa). Position 4475 is an O-(pantetheine 4'-phosphoryl)serine (Ser-4475). The interval 4551 to 4878 is condensation 5; it reads DVLPTTSFQH…LQTIVQHQNN (328 aa).

It belongs to the NRP synthetase family.

The protein operates within secondary metabolite biosynthesis. Functionally, nonribosomal peptide synthetase; part of the gene cluster that mediates the biosynthesis of malformins, cyclic pentapeptides with a disulfide bond between 2 consecutive cysteins, that show potential anti-tumor as well as antimalarial and antitrypanosomal properties. The nonribosomal peptide synthetase mlfA is responsible of the formation of the cyclic pentapeptide. The malformin biosynthesis clusters in malformin-producing fungi also contain enzymes involved in the formation of the disulfide bond between the two consecutive cysteins within malformins, in addition to additional tailoring enzymes such as methyltransferases or oxidoreductases. They are also composed of up to 4 major facilitator superfamily transporters, and transcription factors probably involved in the regulation of the expression of those clusters. The chain is Malformin synthetase mlfA from Aspergillus neoniger (strain CBS 115656).